A 367-amino-acid polypeptide reads, in one-letter code: tRNA/tmRNA (uracil-C(5))-methyltransferase (367 aa).

Residues Gln-190, Tyr-218, Asn-223, Glu-239, and Asp-299 each contribute to the S-adenosyl-L-methionine site. The Nucleophile role is filled by Cys-324. Glu-358 (proton acceptor) is an active-site residue.

It belongs to the class I-like SAM-binding methyltransferase superfamily. RNA M5U methyltransferase family. TrmA subfamily.

It carries out the reaction uridine(54) in tRNA + S-adenosyl-L-methionine = 5-methyluridine(54) in tRNA + S-adenosyl-L-homocysteine + H(+). It catalyses the reaction uridine(341) in tmRNA + S-adenosyl-L-methionine = 5-methyluridine(341) in tmRNA + S-adenosyl-L-homocysteine + H(+). Functionally, dual-specificity methyltransferase that catalyzes the formation of 5-methyluridine at position 54 (m5U54) in all tRNAs, and that of position 341 (m5U341) in tmRNA (transfer-mRNA). The chain is tRNA/tmRNA (uracil-C(5))-methyltransferase from Yersinia enterocolitica serotype O:8 / biotype 1B (strain NCTC 13174 / 8081).